The primary structure comprises 112 residues: Ribonuclease P protein component (112 aa).

The protein belongs to the RnpA family. In terms of assembly, consists of a catalytic RNA component (M1 or rnpB) and a protein subunit.

The enzyme catalyses Endonucleolytic cleavage of RNA, removing 5'-extranucleotides from tRNA precursor.. Functionally, RNaseP catalyzes the removal of the 5'-leader sequence from pre-tRNA to produce the mature 5'-terminus. It can also cleave other RNA substrates such as 4.5S RNA. The protein component plays an auxiliary but essential role in vivo by binding to the 5'-leader sequence and broadening the substrate specificity of the ribozyme. This chain is Ribonuclease P protein component, found in Clostridium kluyveri (strain ATCC 8527 / DSM 555 / NBRC 12016 / NCIMB 10680 / K1).